Reading from the N-terminus, the 507-residue chain is ATP synthase subunit alpha, chloroplastic (507 aa).

ATP is bound at residue 170 to 177 (GDRQTGKT).

Belongs to the ATPase alpha/beta chains family. F-type ATPases have 2 components, CF(1) - the catalytic core - and CF(0) - the membrane proton channel. CF(1) has five subunits: alpha(3), beta(3), gamma(1), delta(1), epsilon(1). CF(0) has four main subunits: a, b, b' and c.

It is found in the plastid. Its subcellular location is the chloroplast thylakoid membrane. It carries out the reaction ATP + H2O + 4 H(+)(in) = ADP + phosphate + 5 H(+)(out). Its function is as follows. Produces ATP from ADP in the presence of a proton gradient across the membrane. The alpha chain is a regulatory subunit. This is ATP synthase subunit alpha, chloroplastic from Manihot esculenta (Cassava).